The primary structure comprises 259 residues: PKHD-type hydroxylase PsycPRwf_1523 (259 aa).

The 101-residue stretch at 80–180 folds into the Fe2OG dioxygenase domain; sequence VIMPPLFSAY…RLAMVTWVQS (101 aa). Fe cation-binding residues include histidine 98, aspartate 100, and histidine 161. Arginine 171 is a binding site for 2-oxoglutarate.

Requires Fe(2+) as cofactor. L-ascorbate is required as a cofactor.

The sequence is that of PKHD-type hydroxylase PsycPRwf_1523 from Psychrobacter sp. (strain PRwf-1).